The chain runs to 184 residues: dITP/XTP pyrophosphatase (184 aa).

Residue 8–13 coordinates substrate; the sequence is TGNKGK. Residues E37 and D66 each coordinate Mg(2+). D66 functions as the Proton acceptor in the catalytic mechanism. Substrate contacts are provided by residues S67, 142–145, K163, and 168–169; these read FGYD and HR.

The protein belongs to the HAM1 NTPase family. In terms of assembly, homodimer. Mg(2+) serves as cofactor.

The enzyme catalyses XTP + H2O = XMP + diphosphate + H(+). The catalysed reaction is dITP + H2O = dIMP + diphosphate + H(+). It carries out the reaction ITP + H2O = IMP + diphosphate + H(+). Functionally, pyrophosphatase that catalyzes the hydrolysis of nucleoside triphosphates to their monophosphate derivatives, with a high preference for the non-canonical purine nucleotides XTP (xanthosine triphosphate), dITP (deoxyinosine triphosphate) and ITP. Seems to function as a house-cleaning enzyme that removes non-canonical purine nucleotides from the nucleotide pool, thus preventing their incorporation into DNA/RNA and avoiding chromosomal lesions. The protein is dITP/XTP pyrophosphatase of Methanosarcina acetivorans (strain ATCC 35395 / DSM 2834 / JCM 12185 / C2A).